The sequence spans 308 residues: tRNA dimethylallyltransferase (308 aa).

11–18 (GPTGIGKT) serves as a coordination point for ATP. 13-18 (TGIGKT) is a substrate binding site. Residues 36–39 (DSMQ) form an interaction with substrate tRNA region.

Belongs to the IPP transferase family. Monomer. It depends on Mg(2+) as a cofactor.

The enzyme catalyses adenosine(37) in tRNA + dimethylallyl diphosphate = N(6)-dimethylallyladenosine(37) in tRNA + diphosphate. Functionally, catalyzes the transfer of a dimethylallyl group onto the adenine at position 37 in tRNAs that read codons beginning with uridine, leading to the formation of N6-(dimethylallyl)adenosine (i(6)A). The polypeptide is tRNA dimethylallyltransferase (Lactobacillus gasseri (strain ATCC 33323 / DSM 20243 / BCRC 14619 / CIP 102991 / JCM 1131 / KCTC 3163 / NCIMB 11718 / NCTC 13722 / AM63)).